We begin with the raw amino-acid sequence, 381 residues long: Chaperone protein DnaJ (381 aa).

The J domain occupies 5–70 (DYYEVLGIER…EKRSAYDQFG (66 aa)). The segment at 137 to 215 (GTTVDIRVPR…CHGEGRVRET (79 aa)) adopts a CR-type zinc-finger fold. Positions 150, 153, 167, 170, 189, 192, 203, and 206 each coordinate Zn(2+). CXXCXGXG motif repeat units follow at residues 150-157 (CEHCDGDG), 167-174 (CPTCHGQG), 189-196 (CPTCHGAG), and 203-210 (CRKCHGEG).

This sequence belongs to the DnaJ family. In terms of assembly, homodimer. Requires Zn(2+) as cofactor.

It localises to the cytoplasm. Functionally, participates actively in the response to hyperosmotic and heat shock by preventing the aggregation of stress-denatured proteins and by disaggregating proteins, also in an autonomous, DnaK-independent fashion. Unfolded proteins bind initially to DnaJ; upon interaction with the DnaJ-bound protein, DnaK hydrolyzes its bound ATP, resulting in the formation of a stable complex. GrpE releases ADP from DnaK; ATP binding to DnaK triggers the release of the substrate protein, thus completing the reaction cycle. Several rounds of ATP-dependent interactions between DnaJ, DnaK and GrpE are required for fully efficient folding. Also involved, together with DnaK and GrpE, in the DNA replication of plasmids through activation of initiation proteins. The chain is Chaperone protein DnaJ from Chromohalobacter salexigens (strain ATCC BAA-138 / DSM 3043 / CIP 106854 / NCIMB 13768 / 1H11).